The following is a 159-amino-acid chain: uncharacterized protein (159 aa).

It belongs to the SufE family.

This is an uncharacterized protein from Synechocystis sp. (strain ATCC 27184 / PCC 6803 / Kazusa).